The sequence spans 374 residues: Cell division protein C (374 aa).

The MIT domain maps to 11 to 73 (ARKYAINAVK…YKRRIEVLKE (63 aa)). 144 to 151 (GPPGCGKT) contacts ATP.

It belongs to the AAA ATPase family. In terms of assembly, interacts with CdvB.

The protein resides in the cytoplasm. It localises to the nucleoid. Part of a cell division machinery. The CdvA, CdvB and CdvC proteins polymerize between segregating nucleoids and persist throughout cell division, forming a successively smaller structure during constriction. This is Cell division protein C from Sulfolobus acidocaldarius (strain ATCC 33909 / DSM 639 / JCM 8929 / NBRC 15157 / NCIMB 11770).